The sequence spans 345 residues: Opioid-binding protein/cell adhesion molecule (345 aa).

The N-terminal stretch at 1 to 27 (MGVCGSLFQPWKCLVVVSLRLLFLVPT) is a signal peptide. Ig-like C2-type domains lie at 39-126 (PKAM…PKTS), 136-219 (PQIM…VKIT), and 223-310 (PPYI…ASIT). 3 N-linked (GlcNAc...) asparagine glycosylation sites follow: Asn-44, Asn-70, and Asn-140. A disulfide bridge connects residues Cys-57 and Cys-115. Intrachain disulfides connect Cys-157–Cys-202 and Cys-244–Cys-296. N-linked (GlcNAc...) asparagine glycans are attached at residues Asn-285, Asn-293, and Asn-306. Asn-322 is lipidated: GPI-anchor amidated asparagine. Residues 323–345 (SASRALACLWLSGTLFAHFFIKF) constitute a propeptide, removed in mature form.

It belongs to the immunoglobulin superfamily. IgLON family.

The protein localises to the cell membrane. Its function is as follows. Binds opioids in the presence of acidic lipids; probably involved in cell contact. The protein is Opioid-binding protein/cell adhesion molecule (OPCML) of Bos taurus (Bovine).